Here is a 442-residue protein sequence, read N- to C-terminus: Trigger factor (442 aa).

The PPIase FKBP-type domain occupies 165–250 (DDRVIIDFEG…LQKVMAPELP (86 aa)).

This sequence belongs to the FKBP-type PPIase family. Tig subfamily.

It is found in the cytoplasm. The catalysed reaction is [protein]-peptidylproline (omega=180) = [protein]-peptidylproline (omega=0). Functionally, involved in protein export. Acts as a chaperone by maintaining the newly synthesized protein in an open conformation. Functions as a peptidyl-prolyl cis-trans isomerase. The protein is Trigger factor of Coxiella burnetii (strain CbuG_Q212) (Coxiella burnetii (strain Q212)).